The primary structure comprises 174 residues: Large ribosomal subunit protein uL10 (174 aa).

Belongs to the universal ribosomal protein uL10 family. As to quaternary structure, part of the ribosomal stalk of the 50S ribosomal subunit. The N-terminus interacts with L11 and the large rRNA to form the base of the stalk. The C-terminus forms an elongated spine to which L12 dimers bind in a sequential fashion forming a multimeric L10(L12)X complex.

Forms part of the ribosomal stalk, playing a central role in the interaction of the ribosome with GTP-bound translation factors. This Coxiella burnetii (strain CbuK_Q154) (Coxiella burnetii (strain Q154)) protein is Large ribosomal subunit protein uL10.